Here is a 361-residue protein sequence, read N- to C-terminus: Beta-hexosaminidase (361 aa).

Residues D69, R77, R144, and 174–175 (KH) each bind substrate. H187 (proton donor/acceptor) is an active-site residue. Catalysis depends on D258, which acts as the Nucleophile.

The protein belongs to the glycosyl hydrolase 3 family. NagZ subfamily.

The protein localises to the cytoplasm. The enzyme catalyses Hydrolysis of terminal non-reducing N-acetyl-D-hexosamine residues in N-acetyl-beta-D-hexosaminides.. It participates in cell wall biogenesis; peptidoglycan recycling. In terms of biological role, plays a role in peptidoglycan recycling by cleaving the terminal beta-1,4-linked N-acetylglucosamine (GlcNAc) from peptide-linked peptidoglycan fragments, giving rise to free GlcNAc, anhydro-N-acetylmuramic acid and anhydro-N-acetylmuramic acid-linked peptides. This Neisseria gonorrhoeae (strain ATCC 700825 / FA 1090) protein is Beta-hexosaminidase.